The primary structure comprises 597 residues: Arginine--tRNA ligase (597 aa).

Residues 138-148 (ANPTGPMHVGH) carry the 'HIGH' region motif.

This sequence belongs to the class-I aminoacyl-tRNA synthetase family. In terms of assembly, monomer.

Its subcellular location is the cytoplasm. The enzyme catalyses tRNA(Arg) + L-arginine + ATP = L-arginyl-tRNA(Arg) + AMP + diphosphate. This is Arginine--tRNA ligase from Nitrobacter winogradskyi (strain ATCC 25391 / DSM 10237 / CIP 104748 / NCIMB 11846 / Nb-255).